The sequence spans 249 residues: Putative adhesin RC1281 (249 aa).

The first 22 residues, 1–22 (MKKLLLIAAASTALLTSGLSFA), serve as a signal peptide directing secretion.

Functionally, adheres to biotinylated epithelial (Vero cell) proteins. The polypeptide is Putative adhesin RC1281 (Rickettsia conorii (strain ATCC VR-613 / Malish 7)).